A 129-amino-acid polypeptide reads, in one-letter code: Large ribosomal subunit protein bL20 (129 aa).

The protein belongs to the bacterial ribosomal protein bL20 family.

Binds directly to 23S ribosomal RNA and is necessary for the in vitro assembly process of the 50S ribosomal subunit. It is not involved in the protein synthesizing functions of that subunit. The protein is Large ribosomal subunit protein bL20 of Mycolicibacterium gilvum (strain PYR-GCK) (Mycobacterium gilvum (strain PYR-GCK)).